A 267-amino-acid chain; its full sequence is Ribosomal RNA small subunit methyltransferase A (267 aa).

Residues Asn-16, Leu-18, Gly-43, Glu-64, Asp-88, and Asn-109 each contribute to the S-adenosyl-L-methionine site.

Belongs to the class I-like SAM-binding methyltransferase superfamily. rRNA adenine N(6)-methyltransferase family. RsmA subfamily.

Its subcellular location is the cytoplasm. The enzyme catalyses adenosine(1518)/adenosine(1519) in 16S rRNA + 4 S-adenosyl-L-methionine = N(6)-dimethyladenosine(1518)/N(6)-dimethyladenosine(1519) in 16S rRNA + 4 S-adenosyl-L-homocysteine + 4 H(+). Its function is as follows. Specifically dimethylates two adjacent adenosines (A1518 and A1519) in the loop of a conserved hairpin near the 3'-end of 16S rRNA in the 30S particle. May play a critical role in biogenesis of 30S subunits. The protein is Ribosomal RNA small subunit methyltransferase A of Acidithiobacillus ferrooxidans (strain ATCC 23270 / DSM 14882 / CIP 104768 / NCIMB 8455) (Ferrobacillus ferrooxidans (strain ATCC 23270)).